The chain runs to 347 residues: Virulence plasmid protein pGP2-D (347 aa).

The protein is Virulence plasmid protein pGP2-D of Chlamydia psittaci (Chlamydophila psittaci).